A 442-amino-acid polypeptide reads, in one-letter code: tRNA-2-methylthio-N(6)-dimethylallyladenosine synthase (442 aa).

One can recognise an MTTase N-terminal domain in the interval 2–120; sequence KKVFIRTFGC…LPKMIVDKET (119 aa). Cys-11, Cys-49, Cys-83, Cys-157, Cys-161, and Cys-164 together coordinate [4Fe-4S] cluster. In terms of domain architecture, Radical SAM core spans 143–375; sequence RVEGGAAFVS…NEVIEAETAR (233 aa). A TRAM domain is found at 378 to 441; the sequence is QTMVGTVQRC…TFSLRGKVVE (64 aa).

Belongs to the methylthiotransferase family. MiaB subfamily. In terms of assembly, monomer. [4Fe-4S] cluster serves as cofactor.

It localises to the cytoplasm. The enzyme catalyses N(6)-dimethylallyladenosine(37) in tRNA + (sulfur carrier)-SH + AH2 + 2 S-adenosyl-L-methionine = 2-methylsulfanyl-N(6)-dimethylallyladenosine(37) in tRNA + (sulfur carrier)-H + 5'-deoxyadenosine + L-methionine + A + S-adenosyl-L-homocysteine + 2 H(+). In terms of biological role, catalyzes the methylthiolation of N6-(dimethylallyl)adenosine (i(6)A), leading to the formation of 2-methylthio-N6-(dimethylallyl)adenosine (ms(2)i(6)A) at position 37 in tRNAs that read codons beginning with uridine. This is tRNA-2-methylthio-N(6)-dimethylallyladenosine synthase from Neisseria meningitidis serogroup B (strain ATCC BAA-335 / MC58).